A 183-amino-acid polypeptide reads, in one-letter code: UPF0398 protein BLi02355/BL05236 (183 aa).

This sequence belongs to the UPF0398 family.

This chain is UPF0398 protein BLi02355/BL05236, found in Bacillus licheniformis (strain ATCC 14580 / DSM 13 / JCM 2505 / CCUG 7422 / NBRC 12200 / NCIMB 9375 / NCTC 10341 / NRRL NRS-1264 / Gibson 46).